We begin with the raw amino-acid sequence, 324 residues long: tRNA U34 carboxymethyltransferase (324 aa).

Carboxy-S-adenosyl-L-methionine is bound by residues K91, W105, K110, G130, D152–S154, I181–E182, M196, Y200, and R315.

It belongs to the class I-like SAM-binding methyltransferase superfamily. CmoB family. In terms of assembly, homotetramer.

It carries out the reaction carboxy-S-adenosyl-L-methionine + 5-hydroxyuridine(34) in tRNA = 5-carboxymethoxyuridine(34) in tRNA + S-adenosyl-L-homocysteine + H(+). Its function is as follows. Catalyzes carboxymethyl transfer from carboxy-S-adenosyl-L-methionine (Cx-SAM) to 5-hydroxyuridine (ho5U) to form 5-carboxymethoxyuridine (cmo5U) at position 34 in tRNAs. The protein is tRNA U34 carboxymethyltransferase of Photobacterium profundum (strain SS9).